A 116-amino-acid polypeptide reads, in one-letter code: Large ribosomal subunit protein bL17 (116 aa).

The protein belongs to the bacterial ribosomal protein bL17 family. As to quaternary structure, part of the 50S ribosomal subunit. Contacts protein L32.

In Synechococcus sp. (strain JA-3-3Ab) (Cyanobacteria bacterium Yellowstone A-Prime), this protein is Large ribosomal subunit protein bL17.